The chain runs to 360 residues: GDSL esterase/lipase At1g06990 (360 aa).

Residues 1 to 22 (MLIHVIIFMIITTMQFSTTCHA) form the signal peptide. 2 N-linked (GlcNAc...) asparagine glycosylation sites follow: N26 and N31. The Nucleophile role is filled by S44. Residues N73, N126, and N272 are each glycosylated (N-linked (GlcNAc...) asparagine). Catalysis depends on residues D335 and H338.

Belongs to the 'GDSL' lipolytic enzyme family.

It localises to the secreted. This chain is GDSL esterase/lipase At1g06990, found in Arabidopsis thaliana (Mouse-ear cress).